The following is a 274-amino-acid chain: Phosphoribosylaminoimidazole-succinocarboxamide synthase (274 aa).

It belongs to the SAICAR synthetase family.

The enzyme catalyses 5-amino-1-(5-phospho-D-ribosyl)imidazole-4-carboxylate + L-aspartate + ATP = (2S)-2-[5-amino-1-(5-phospho-beta-D-ribosyl)imidazole-4-carboxamido]succinate + ADP + phosphate + 2 H(+). It functions in the pathway purine metabolism; IMP biosynthesis via de novo pathway; 5-amino-1-(5-phospho-D-ribosyl)imidazole-4-carboxamide from 5-amino-1-(5-phospho-D-ribosyl)imidazole-4-carboxylate: step 1/2. The sequence is that of Phosphoribosylaminoimidazole-succinocarboxamide synthase from Nitrosopumilus maritimus (strain SCM1).